The primary structure comprises 137 residues: Phosphomevalonate dehydratase small subunit (137 aa).

The active-site Proton acceptor is Ser65.

Belongs to the AcnX type II small subunit family. In terms of assembly, heterodimer composed of a large subunit (PMDh-L) and a small subunit (PMDh-S).

It carries out the reaction (R)-5-phosphomevalonate = (2E)-3-methyl-5-phosphooxypent-2-enoate + H2O. It participates in isoprenoid biosynthesis; isopentenyl diphosphate biosynthesis via mevalonate pathway. Its function is as follows. Component of a hydro-lyase that catalyzes the dehydration of mevalonate 5-phosphate (MVA5P) to form trans-anhydromevalonate 5-phosphate (tAHMP). Involved in the archaeal mevalonate (MVA) pathway, which provides fundamental precursors for isoprenoid biosynthesis, such as isopentenyl diphosphate (IPP) and dimethylallyl diphosphate (DMAPP). This is Phosphomevalonate dehydratase small subunit from Methanococcoides burtonii (strain DSM 6242 / NBRC 107633 / OCM 468 / ACE-M).